The sequence spans 350 residues: Probable nicotinate-nucleotide adenylyltransferase/Ap4A hydrolase (350 aa).

Positions 1–187 (MKQKIIIFGG…YINTNHLYLI (187 aa)) are naMN adenylyltransferase. The ap4A hydrolase stretch occupies residues 196–350 (DKRFQHCLRV…LKYVQNLVKD (155 aa)). Residues 198–310 (RFQHCLRVGK…VYLADKLEPN (113 aa)) enclose the HD domain. His-201 contacts ADP. Positions 201, 230, and 231 each coordinate Fe cation. Residues 231–234 (DLAK), His-261, 287–288 (HT), Asp-305, and Arg-311 contribute to the ADP site. Fe cation is bound at residue Asp-305.

This sequence in the N-terminal section; belongs to the NadD family. It in the C-terminal section; belongs to the Ap4A hydrolase YqeK family.

It catalyses the reaction nicotinate beta-D-ribonucleotide + ATP + H(+) = deamido-NAD(+) + diphosphate. The catalysed reaction is P(1),P(4)-bis(5'-adenosyl) tetraphosphate + H2O = 2 ADP + 2 H(+). It functions in the pathway cofactor biosynthesis; NAD(+) biosynthesis; deamido-NAD(+) from nicotinate D-ribonucleotide: step 1/1. In terms of biological role, catalyzes the reversible adenylation of nicotinate mononucleotide (NaMN) to nicotinic acid adenine dinucleotide (NaAD). Hydrolyzes diadenosine 5',5'''-P1,P4-tetraphosphate (Ap4A) to yield ADP. This chain is Probable nicotinate-nucleotide adenylyltransferase/Ap4A hydrolase, found in Mycoplasma genitalium (strain ATCC 33530 / DSM 19775 / NCTC 10195 / G37) (Mycoplasmoides genitalium).